The following is a 179-amino-acid chain: O-acetyl-ADP-ribose deacetylase (179 aa).

Residues 1 to 175 form the Macro domain; that stretch reads MTSRLQVIQG…LYARLLTQQG (175 aa). Substrate-binding positions include 11–12, Asn25, 33–35, and 122–126; these read DI, GVD, and STGVY. Asp35 functions as the Proton acceptor in the catalytic mechanism.

It belongs to the MacroD-type family. YmdB subfamily. In terms of assembly, homodimer. Interacts with RNase III.

It carries out the reaction 3''-O-acetyl-ADP-D-ribose + H2O = ADP-D-ribose + acetate + H(+). The enzyme catalyses 2''-O-acetyl-ADP-D-ribose + H2O = ADP-D-ribose + acetate + H(+). In terms of biological role, deacetylates O-acetyl-ADP ribose to yield ADP-ribose and free acetate. Down-regulates ribonuclease 3 (RNase III) activity. Acts by interacting directly with the region of the ribonuclease that is required for dimerization/activation. This is O-acetyl-ADP-ribose deacetylase from Salmonella newport (strain SL254).